A 179-amino-acid polypeptide reads, in one-letter code: Interleukin-22 (179 aa).

Residues 1–33 (MAALQKSVSSFLMGTLATSCLLLLALLVQGGAA) form the signal peptide. 2 cysteine pairs are disulfide-bonded: Cys-40/Cys-132 and Cys-89/Cys-178. N-linked (GlcNAc...) asparagine glycans are attached at residues Asn-54, Asn-68, and Asn-97.

Belongs to the IL-10 family.

It localises to the secreted. Functionally, cytokine that plays a critical role in modulating tissue responses during inflammation. Plays an essential role in the regeneration of epithelial cells to maintain barrier function after injury and for the prevention of further tissue damage. Unlike most of the cytokines, has no effect on immune cells. Signals through a heterodimeric receptor composed of two subunits, the specific receptor IL22RA1 which is present on non-immune cells in many organs and the shared subunit IL10RB. Ligation of IL22RA1 with IL22 induces activation of the tyrosine kinases JAK1 and TYK2, which in turn activates STAT3. In turn, promotes cell survival and proliferation through STAT3, ERK1/2 and PI3K/AKT pathways. Promotes phosphorylation of GSK3B at 'Ser-9' and CTTN. Promotes epithelial cell spreading. This chain is Interleukin-22 (IL22), found in Homo sapiens (Human).